A 952-amino-acid chain; its full sequence is Probable RNA-binding protein 19 (952 aa).

Residues 2-79 (SRLIVKNLPN…TRITVEFCKS (78 aa)) form the RRM 1 domain. 3 disordered regions span residues 85–126 (KPRA…LEKL), 159–267 (KAKT…RGAV), and 367–395 (KQAP…EEED). Residues 95–109 (KSSQPKQPSQDSVPS) are compositionally biased toward low complexity. Over residues 163-180 (KASSDYLNFDSDSNSDSG) the composition is skewed to polar residues. A phosphoserine mark is found at S177, S179, and S183. 2 stretches are compositionally biased toward acidic residues: residues 181-196 (QESE…EEEQ) and 224-251 (SSED…EEEG). 2 RRM domains span residues 293–368 (YTVK…REKQ) and 400–478 (GRLF…PSTI). Residue K479 forms a Glycyl lysine isopeptide (Lys-Gly) (interchain with G-Cter in SUMO2) linkage. Residues 481–504 (EASQEANAPGSSYKKKKEAMDKAN) form a disordered region. The RRM 4 domain maps to 584 to 656 (TVILAKNLPA…VPLYLEWAPI (73 aa)). A compositionally biased stretch (basic and acidic residues) spans 664–679 (QKKDSQHEQPAEKAEV). Positions 664-719 (QKKDSQHEQPAEKAEVEQETVLDPEGEKASVEGAEASTGKMEEEEEEEEEEEEESI) are disordered. Position 693 is a phosphoserine (S693). Residues 705-718 (EEEEEEEEEEEEES) show a composition bias toward acidic residues. RRM domains lie at 722 to 803 (CTLF…ISER) and 824 to 904 (SKIL…WADS). 2 positions are modified to phosphoserine: S928 and S944.

It belongs to the RRM MRD1 family. Expressed in the crypts of Lieberkuhn of the intestine (at protein level).

The protein resides in the nucleus. Its subcellular location is the nucleolus. The protein localises to the nucleoplasm. It localises to the cytoplasm. It is found in the chromosome. In terms of biological role, plays a role in embryo pre-implantation development. In Mus musculus (Mouse), this protein is Probable RNA-binding protein 19 (Rbm19).